The sequence spans 140 residues: ATP synthase epsilon chain (140 aa).

The protein belongs to the ATPase epsilon chain family. In terms of assembly, F-type ATPases have 2 components, CF(1) - the catalytic core - and CF(0) - the membrane proton channel. CF(1) has five subunits: alpha(3), beta(3), gamma(1), delta(1), epsilon(1). CF(0) has three main subunits: a, b and c.

It localises to the cell inner membrane. Produces ATP from ADP in the presence of a proton gradient across the membrane. The sequence is that of ATP synthase epsilon chain from Colwellia maris.